A 342-amino-acid polypeptide reads, in one-letter code: Holliday junction branch migration complex subunit RuvB (342 aa).

The segment at 1–179 (MTNILSPEKS…FGIPMRLNFY (179 aa)) is large ATPase domain (RuvB-L). Residues Ile-18, Arg-19, Gly-60, Lys-63, Thr-64, Thr-65, 126-128 (EDF), Arg-169, Tyr-179, and Arg-216 contribute to the ATP site. Thr-64 provides a ligand contact to Mg(2+). The tract at residues 180-250 (NTEELKKVLN…ISDFGLNRLE (71 aa)) is small ATPAse domain (RuvB-S). Residues 253 to 342 (CIGLDSNDYR…HQFNIFNENE (90 aa)) form a head domain (RuvB-H) region. 3 residues coordinate DNA: Arg-289, Arg-308, and Arg-313.

It belongs to the RuvB family. Homohexamer. Forms an RuvA(8)-RuvB(12)-Holliday junction (HJ) complex. HJ DNA is sandwiched between 2 RuvA tetramers; dsDNA enters through RuvA and exits via RuvB. An RuvB hexamer assembles on each DNA strand where it exits the tetramer. Each RuvB hexamer is contacted by two RuvA subunits (via domain III) on 2 adjacent RuvB subunits; this complex drives branch migration. In the full resolvosome a probable DNA-RuvA(4)-RuvB(12)-RuvC(2) complex forms which resolves the HJ.

The protein resides in the cytoplasm. The enzyme catalyses ATP + H2O = ADP + phosphate + H(+). The RuvA-RuvB-RuvC complex processes Holliday junction (HJ) DNA during genetic recombination and DNA repair, while the RuvA-RuvB complex plays an important role in the rescue of blocked DNA replication forks via replication fork reversal (RFR). RuvA specifically binds to HJ cruciform DNA, conferring on it an open structure. The RuvB hexamer acts as an ATP-dependent pump, pulling dsDNA into and through the RuvAB complex. RuvB forms 2 homohexamers on either side of HJ DNA bound by 1 or 2 RuvA tetramers; 4 subunits per hexamer contact DNA at a time. Coordinated motions by a converter formed by DNA-disengaged RuvB subunits stimulates ATP hydrolysis and nucleotide exchange. Immobilization of the converter enables RuvB to convert the ATP-contained energy into a lever motion, pulling 2 nucleotides of DNA out of the RuvA tetramer per ATP hydrolyzed, thus driving DNA branch migration. The RuvB motors rotate together with the DNA substrate, which together with the progressing nucleotide cycle form the mechanistic basis for DNA recombination by continuous HJ branch migration. Branch migration allows RuvC to scan DNA until it finds its consensus sequence, where it cleaves and resolves cruciform DNA. In Rickettsia africae (strain ESF-5), this protein is Holliday junction branch migration complex subunit RuvB.